Reading from the N-terminus, the 1538-residue chain is Phenolphthiocerol/phthiocerol polyketide synthase subunit B (1538 aa).

Positions 33–455 (AEPVAVVGIG…GTNAHVIIEQ (423 aa)) constitute a Ketosynthase family 3 (KS3) domain. Catalysis depends on for beta-ketoacyl synthase activity residues cysteine 205, histidine 340, and histidine 377. Residues 553–882 (DGSPGPGTVF…TNLYTADIAH (330 aa)) are acyltransferase. The active-site For malonyltransferase activity is serine 649. 1153–1196 (SQLVIGATGNIGPHLIRQLARMGAKTIVAMARKPGALDELTQCL) contributes to the NADP(+) binding site. The tract at residues 1153-1328 (SQLVIGATGN…TVVDWGLWKS (176 aa)) is beta-ketoacyl reductase. One can recognise a Carrier domain in the interval 1423-1498 (DMLFDHVGAL…SLTDYLATVL (76 aa)). Position 1458 is an O-(pantetheine 4'-phosphoryl)serine (serine 1458).

Requires NADP(+) as cofactor. It depends on pantetheine 4'-phosphate as a cofactor.

The catalysed reaction is icosanoyl-[(phenol)carboxyphthiodiolenone synthase] + 2 (S)-methylmalonyl-CoA + 3 malonyl-CoA + 5 NADPH + 10 H(+) = C32-carboxyphthiodiolenone-[(phenol)carboxyphthiodiolenone synthase] + 5 CO2 + 5 NADP(+) + 5 CoA + 2 H2O. It carries out the reaction docosanoyl-[(phenol)carboxyphthiodiolenone synthase] + 2 (S)-methylmalonyl-CoA + 3 malonyl-CoA + 5 NADPH + 10 H(+) = C34-carboxyphthiodiolenone-[(phenol)carboxyphthiodiolenone synthase] + 5 CO2 + 5 NADP(+) + 5 CoA + 2 H2O. The enzyme catalyses 17-(4-hydroxyphenyl)heptadecanoyl-[(phenol)carboxyphthiodiolenone synthase] + 2 (S)-methylmalonyl-CoA + 3 malonyl-CoA + 5 NADPH + 10 H(+) = C35-(phenol)carboxyphthiodiolenone-[(phenol)carboxyphthiodiolenone synthase] + 5 CO2 + 5 NADP(+) + 5 CoA + 2 H2O. It catalyses the reaction 19-(4-hydroxyphenyl)nonadecanoyl-[(phenol)carboxyphthiodiolenone synthase] + 2 (S)-methylmalonyl-CoA + 3 malonyl-CoA + 5 NADPH + 10 H(+) = C37-(phenol)carboxyphthiodiolenone-[(phenol)carboxyphthiodiolenone synthase] + 5 CO2 + 5 NADP(+) + 5 CoA + 2 H2O. Its pathway is lipid metabolism; fatty acid biosynthesis. Functionally, part of the PpsABCDE complex involved in the biosynthesis of the lipid core common to phthiocerols and phenolphthiocerols by successive additions of malonyl-CoA or methylmalonyl-CoA extender units. PpsA can accept as substrate the activated forms of either icosanoyl (C20), docosanoyl (C22) or lignoceroyl (C24) groups from FadD26, or a (4-hydroxyphenyl)-C17 or (4-hydroxyphenyl)-C19 fatty acyl from FadD29. PpsA initiates the biosynthesis and extends its substrate using a malonyl-CoA extender unit. The PpsB and PpsC proteins add the second and third malonyl-CoA extender units. PpsD adds an (R)-methylmalonyl unit and PpsE adds a second (R)-methylmalonyl unit. The incorporation of the methylmalonyl units results in formation of two branched methyl groups in the elongated product. The sequence is that of Phenolphthiocerol/phthiocerol polyketide synthase subunit B (ppsB) from Mycobacterium bovis (strain ATCC BAA-935 / AF2122/97).